Consider the following 202-residue polypeptide: Peptide methionine sulfoxide reductase B1, chloroplastic (202 aa).

Residues 1–63 (MASSTRLTII…SSSPKPDNVQ (63 aa)) constitute a chloroplast transit peptide. The segment at 48–67 (YSMGSSSSSPKPDNVQEAEK) is disordered. The MsrB domain maps to 75–197 (ENEWKKRLTP…NSAALKLNAL (123 aa)). Residues Cys114, Cys117, Cys163, and Cys166 each coordinate Zn(2+). Cys186 (nucleophile) is an active-site residue.

Belongs to the MsrB Met sulfoxide reductase family. Requires Zn(2+) as cofactor. In terms of tissue distribution, expressed at low levels in stems, leaves, floral buds, flowers and siliques (at protein level).

The protein localises to the plastid. Its subcellular location is the chloroplast. It carries out the reaction L-methionyl-[protein] + [thioredoxin]-disulfide + H2O = L-methionyl-(R)-S-oxide-[protein] + [thioredoxin]-dithiol. In terms of biological role, catalyzes the reduction of methionine sulfoxide (MetSO) to methionine in proteins. Specifically reduces the MetSO R-enantiomer. Plays a protective role against oxidative stress by restoring activity to proteins that have been inactivated by methionine oxidation. May play an essential function in association with MSRB2 in maintaining vegetative growth during environmental constraints, through the preservation of photosynthetic antennae. MSRB1 and MSRB2 account for most of the leaf peptide MSR capacity. The sequence is that of Peptide methionine sulfoxide reductase B1, chloroplastic from Arabidopsis thaliana (Mouse-ear cress).